A 240-amino-acid chain; its full sequence is Transcriptional regulatory protein ResD (240 aa).

In terms of domain architecture, Response regulatory spans 8 to 121; sequence KILVVDDEAR…EVVLRVKALL (114 aa). Asp-57 is subject to 4-aspartylphosphate. The ompR/PhoB-type DNA-binding region spans 137 to 237; sequence KNVLVFSHLS…VWGVGYKFEV (101 aa).

As to quaternary structure, interacts with the RNA polymerase core. Phosphorylated by ResE.

The protein localises to the cytoplasm. In terms of biological role, member of the two-component regulatory system ResD/ResE. Required for the expression of resA, ctaA, qcrABC and fnr; activation role in global regulation of aerobic and anaerobic respiration. This is Transcriptional regulatory protein ResD (resD) from Bacillus subtilis (strain 168).